The primary structure comprises 44 residues: Pandinin-1 (44 aa).

Expressed by the venom gland.

It localises to the secreted. Its subcellular location is the target cell membrane. Its function is as follows. Disrupts cell membranes through formation of pores. Strong antimicrobial activity against Gram-positive bacteria B.subtilis, S.epidermidis, E.faecalis and S.aureus. Less active against Gram-negative bacteria P.aeruginosa and E.coli. Has no antifungal or hemolytic activity. This is Pandinin-1 from Pandinus imperator (Emperor scorpion).